A 391-amino-acid polypeptide reads, in one-letter code: MTQVPNRETPRGVAILTRFLASESAGGIVLMAAALAALIVANSPLSAGYFSTLHSVWLGLSVELWINDGLMAIFFLMVGLEIKREVLAGGLATWGQRALPGFAALGGMLVPALIYIAINWGNPQTLSGWAIPAATDIAFALGVLSLLGNRVPTSLKVFLAALAILDDLGAVTIIAFFYSSGLNLPMLAAAFVTLAVLVALNRLNIRRLLPYLLLGALLWFFVLQSGVHATLAGVALALCIPMGKPEEEARSPLLLLEEKMHYWVAFAVVPIFGFANAGVSLSGITLANLIDPVPLGVALGLFVGKQIGVFLAAVLAIRAGLAVLPEGSNWVQLYGVAILCGIGFTMSLFIGNLAFPGSQHLIDEVKVGVLIGSGLAAVAGIVLLRSRFSRH.

Helical transmembrane passes span 25–45 (AGGI…NSPL), 56–76 (VWLG…IFFL), 98–118 (ALPG…YIAI), 128–148 (GWAI…SLLG), 157–177 (VFLA…IAFF), 180–200 (SGLN…LVAL), 208–228 (LLPY…SGVH), 264–284 (VAFA…LSGI), 297–317 (VALG…VLAI), 335–355 (GVAI…NLAF), and 364–384 (EVKV…IVLL).

It belongs to the NhaA Na(+)/H(+) (TC 2.A.33) antiporter family.

It localises to the cell inner membrane. It catalyses the reaction Na(+)(in) + 2 H(+)(out) = Na(+)(out) + 2 H(+)(in). In terms of biological role, na(+)/H(+) antiporter that extrudes sodium in exchange for external protons. This Pseudomonas syringae pv. tomato (strain ATCC BAA-871 / DC3000) protein is Na(+)/H(+) antiporter NhaA 2.